A 384-amino-acid polypeptide reads, in one-letter code: Acetylornithine aminotransferase (384 aa).

Pyridoxal 5'-phosphate-binding positions include glycine 95–alanine 96 and phenylalanine 122. Arginine 125 provides a ligand contact to N(2)-acetyl-L-ornithine. Aspartate 207–glutamine 210 contacts pyridoxal 5'-phosphate. Position 236 is an N6-(pyridoxal phosphate)lysine (lysine 236). Serine 264 contacts N(2)-acetyl-L-ornithine. Threonine 265 lines the pyridoxal 5'-phosphate pocket.

This sequence belongs to the class-III pyridoxal-phosphate-dependent aminotransferase family. ArgD subfamily. Homodimer. It depends on pyridoxal 5'-phosphate as a cofactor.

The protein resides in the cytoplasm. It catalyses the reaction N(2)-acetyl-L-ornithine + 2-oxoglutarate = N-acetyl-L-glutamate 5-semialdehyde + L-glutamate. It participates in amino-acid biosynthesis; L-arginine biosynthesis; N(2)-acetyl-L-ornithine from L-glutamate: step 4/4. In Halalkalibacterium halodurans (strain ATCC BAA-125 / DSM 18197 / FERM 7344 / JCM 9153 / C-125) (Bacillus halodurans), this protein is Acetylornithine aminotransferase.